Reading from the N-terminus, the 570-residue chain is MRKNTIWNYSLIFFCCVLKSISTLDHGPHTVSVDSNRHNTQHQYKQNPNVASQRHSSHESGQSLHNSQSEHVTHIAASHAGSGGEHSTHLAQNLHRSSYNLLSEAMSQAVSNEFSSMGSGSADGACAADDFDCYSGSVQDRFGMEAIASLHRQLDDDDNGNIDLSESDDFLREELKYDSGYEKRQKAFHFNDDMHISVKELWEAWLRSEVHNWTIEQTTDWLAQSVQLPQYVDLFKLHKVTGAALPRLAVNNLQYVGNVLGIKDPIHKQKISLKAMDVVLFGPPRETGTRWKDYILVTLLLSAIIGCWYAYQQNKNAKRHLRRMAQDMEGLQRAEQSLQEMQKELERARMEQENVATEKLDLERRLKEAPTLSSSNSDLEVQQLKKEIEMLRNELSRAEFELVDNCWSPPPQLQSWLQYTYELESKNHQKKRTSAEKQLQSAREACEKLRKKRSSLVGAFVSTHGKSIDDVDRSIVEARNALGDVTNELQERLHRWKQIETCLGLNIVNNNGLPYLENVLYGRNGGLQSSMGMSSTKGSRARITNSTEDLDDESIQGKLNFENFSLLATE.

Positions 1–23 are cleaved as a signal peptide; sequence MRKNTIWNYSLIFFCCVLKSIST. Residues 24 to 294 are Extracellular-facing; it reads LDHGPHTVSV…RETGTRWKDY (271 aa). The segment at 40–71 is disordered; the sequence is TQHQYKQNPNVASQRHSSHESGQSLHNSQSEH. The segment covering 41–70 has biased composition (polar residues); sequence QHQYKQNPNVASQRHSSHESGQSLHNSQSE. An EF-hand domain is found at 142–177; that stretch reads FGMEAIASLHRQLDDDDNGNIDLSESDDFLREELKY. Residues aspartate 155, aspartate 157, asparagine 159, asparagine 161, and glutamate 166 each coordinate Ca(2+). Asparagine 212 is a glycosylation site (N-linked (GlcNAc...) asparagine). Positions 213 to 281 constitute an SAM domain; that stretch reads WTIEQTTDWL…SLKAMDVVLF (69 aa). Residues 295–312 form a helical membrane-spanning segment; sequence ILVTLLLSAIIGCWYAYQ. Coiled-coil stretches lie at residues 310–407 and 420–462; these read AYQQ…DNCW and TYEL…AFVS. Residues 313–570 are Cytoplasmic-facing; the sequence is QNKNAKRHLR…FENFSLLATE (258 aa). Residues serine 539 and serine 546 each carry the phosphoserine modification.

It is found in the cell membrane. Functionally, plays a role in mediating Ca(2+) influx following depletion of intracellular Ca(2+) stores. This chain is Stromal interaction molecule homolog (Stim), found in Drosophila melanogaster (Fruit fly).